A 130-amino-acid polypeptide reads, in one-letter code: Cholecystokinin (130 aa).

Positions 1–20 (MYSGICICVFLAVLSASSFG) are cleaved as a signal peptide. A propeptide spanning residues 21–48 (QQTAGSHNGNPLAAELEQSLTEHHRHVR) is cleaved from the precursor. A disordered region spans residues 40–59 (LTEHHRHVRAPSSAGPLKPV). Tyrosine 112 carries the post-translational modification Sulfotyrosine. The residue at position 118 (phenylalanine 118) is a Phenylalanine amide. Positions 122-130 (SAEEYEYSS) are excised as a propeptide. Sulfotyrosine is present on residues tyrosine 126 and tyrosine 128.

The protein belongs to the gastrin/cholecystokinin family. Post-translationally, the precursor is cleaved by proteases to produce a number of active cholecystokinins. In terms of tissue distribution, highly concentrated in the duodenum. Also localized in more distal parts of the small intestine.

Its subcellular location is the secreted. Functionally, this peptide hormone induces gall bladder contraction and the release of pancreatic enzymes in the gut. Its function in the brain is not clear. In Struthio camelus (Common ostrich), this protein is Cholecystokinin (CCK).